Here is a 265-residue protein sequence, read N- to C-terminus: Glutamate 5-kinase (265 aa).

Lys15 is an ATP binding site. The substrate site is built by Ser55, Asp142, and Asn158. Residues 178–179 and 220–226 contribute to the ATP site; these read SD and TGGMVTK.

Belongs to the glutamate 5-kinase family.

The protein resides in the cytoplasm. It catalyses the reaction L-glutamate + ATP = L-glutamyl 5-phosphate + ADP. It functions in the pathway amino-acid biosynthesis; L-proline biosynthesis; L-glutamate 5-semialdehyde from L-glutamate: step 1/2. In terms of biological role, catalyzes the transfer of a phosphate group to glutamate to form L-glutamate 5-phosphate. The polypeptide is Glutamate 5-kinase (Lactiplantibacillus plantarum (strain ATCC BAA-793 / NCIMB 8826 / WCFS1) (Lactobacillus plantarum)).